Reading from the N-terminus, the 666-residue chain is UvrABC system protein B (666 aa).

In terms of domain architecture, Helicase ATP-binding spans 28–171 (NNINQGIQRQ…YLHVGELIEF (144 aa)). 41 to 48 (GATGTGKT) contacts ATP. Residues 94–117 (YFDYYQPEAYKPITDTYIEKDSVT) carry the Beta-hairpin motif. The Helicase C-terminal domain occupies 436 to 598 (QIDDLINELM…IIPKTIIKPI (163 aa)). Residues 624–659 (NQKIKELKKKMEEAAKKREYEVAAQYRDMIVELEAI) form the UVR domain.

This sequence belongs to the UvrB family. Forms a heterotetramer with UvrA during the search for lesions. Interacts with UvrC in an incision complex.

It localises to the cytoplasm. In terms of biological role, the UvrABC repair system catalyzes the recognition and processing of DNA lesions. A damage recognition complex composed of 2 UvrA and 2 UvrB subunits scans DNA for abnormalities. Upon binding of the UvrA(2)B(2) complex to a putative damaged site, the DNA wraps around one UvrB monomer. DNA wrap is dependent on ATP binding by UvrB and probably causes local melting of the DNA helix, facilitating insertion of UvrB beta-hairpin between the DNA strands. Then UvrB probes one DNA strand for the presence of a lesion. If a lesion is found the UvrA subunits dissociate and the UvrB-DNA preincision complex is formed. This complex is subsequently bound by UvrC and the second UvrB is released. If no lesion is found, the DNA wraps around the other UvrB subunit that will check the other stand for damage. The chain is UvrABC system protein B from Ureaplasma parvum serovar 3 (strain ATCC 27815 / 27 / NCTC 11736).